Consider the following 46-residue polypeptide: Large ribosomal subunit protein bL36 (46 aa).

The protein belongs to the bacterial ribosomal protein bL36 family.

The protein is Large ribosomal subunit protein bL36 of Klebsiella pneumoniae (strain 342).